A 129-amino-acid polypeptide reads, in one-letter code: Large ribosomal subunit protein bL19 (129 aa).

The protein belongs to the bacterial ribosomal protein bL19 family.

This protein is located at the 30S-50S ribosomal subunit interface and may play a role in the structure and function of the aminoacyl-tRNA binding site. This Paraburkholderia phytofirmans (strain DSM 17436 / LMG 22146 / PsJN) (Burkholderia phytofirmans) protein is Large ribosomal subunit protein bL19.